The chain runs to 441 residues: NADH-quinone oxidoreductase subunit D (441 aa).

This sequence belongs to the complex I 49 kDa subunit family. In terms of assembly, NDH-1 is composed of 14 different subunits. Subunits NuoB, C, D, E, F, and G constitute the peripheral sector of the complex.

It is found in the cell membrane. The catalysed reaction is a quinone + NADH + 5 H(+)(in) = a quinol + NAD(+) + 4 H(+)(out). In terms of biological role, NDH-1 shuttles electrons from NADH, via FMN and iron-sulfur (Fe-S) centers, to quinones in the respiratory chain. The immediate electron acceptor for the enzyme in this species is believed to be a menaquinone. Couples the redox reaction to proton translocation (for every two electrons transferred, four hydrogen ions are translocated across the cytoplasmic membrane), and thus conserves the redox energy in a proton gradient. In Mycobacterium avium (strain 104), this protein is NADH-quinone oxidoreductase subunit D.